The following is a 308-amino-acid chain: 3'(2'),5'-bisphosphate nucleotidase 1 (308 aa).

At Ala-2 the chain carries N-acetylalanine. The active-site Proton acceptor is the Asp-51. Mg(2+) is bound by residues Glu-74, Asp-117, Leu-119, and Asp-120. The active-site Proton acceptor is Thr-122. Residue Thr-122 is modified to Phosphothreonine. AMP-binding residues include Thr-195, His-198, Gly-220, and Lys-224. Ser-240 bears the Phosphoserine mark. Position 244 is an N6-succinyllysine (Lys-244). Asp-247 contributes to the Mg(2+) binding site.

It belongs to the inositol monophosphatase superfamily. It depends on Mg(2+) as a cofactor. In terms of tissue distribution, highly expressed in kidney, liver, pancreas and heart. Detected at lower levels in brain, placenta, lung and skeletal muscle.

It carries out the reaction adenosine 3',5'-bisphosphate + H2O = AMP + phosphate. The catalysed reaction is adenosine 2',5'-bisphosphate + H2O = AMP + phosphate. The enzyme catalyses 3'-phosphoadenylyl sulfate + H2O = adenosine 5'-phosphosulfate + phosphate. It catalyses the reaction 1D-myo-inositol 1,4-bisphosphate + H2O = 1D-myo-inositol 4-phosphate + phosphate. It carries out the reaction 1D-myo-inositol 1,3,4-trisphosphate + H2O = 1D-myo-inositol 3,4-bisphosphate + phosphate. Its activity is regulated as follows. Is very sensitive to inhibition by Li(+) (IC(50)=0.3 mM for hydrolysis of PAP; IC(50)=0.6 mM for hydrolysis of inositol-1,4-bis-phosphate). Is not affected by high Na(+) concentrations. In terms of biological role, phosphatase that converts 3'(2')-phosphoadenosine 5'-phosphate (PAP) to AMP and inositol 1,4-bisphosphate (Ins(1,4)P2) to inositol 4-phosphate. Is also able to hydrolyze adenosine 3'-phosphate 5'-phosphosulfate (PAPS) to adenosine 5'-phosphosulfate (APS). Probably prevents the toxic accumulation of PAP, a compound which inhibits a variety of proteins, including PAPS-utilizing enzymes such as sulfotransferases, and RNA processing enzymes. Could also play a role in inositol recycling and phosphoinositide metabolism. Is not active on 3'-AMP, inositol-1-phosphate and inositol-1,4,5-triphosphate. The chain is 3'(2'),5'-bisphosphate nucleotidase 1 (BPNT1) from Homo sapiens (Human).